Here is a 327-residue protein sequence, read N- to C-terminus: ATP-dependent 6-phosphofructokinase (327 aa).

Residue glycine 12 participates in ATP binding. Residues arginine 22–arginine 26 and arginine 55–aspartate 60 contribute to the ADP site. ATP is bound by residues arginine 73–phenylalanine 74 and glycine 103–serine 106. Residue aspartate 104 participates in Mg(2+) binding. Threonine 127–aspartate 129 provides a ligand contact to substrate. Aspartate 129 (proton acceptor) is an active-site residue. Arginine 156 lines the ADP pocket. Residues arginine 164 and methionine 171 to arginine 173 contribute to the substrate site. ADP is bound by residues glycine 187–glutamate 189, lysine 213, and lysine 215–histidine 217. Substrate is bound by residues glutamate 224, arginine 245, and histidine 251–arginine 254.

This sequence belongs to the phosphofructokinase type A (PFKA) family. ATP-dependent PFK group I subfamily. Prokaryotic clade 'B1' sub-subfamily. As to quaternary structure, homotetramer. Mg(2+) is required as a cofactor.

It localises to the cytoplasm. The catalysed reaction is beta-D-fructose 6-phosphate + ATP = beta-D-fructose 1,6-bisphosphate + ADP + H(+). It participates in carbohydrate degradation; glycolysis; D-glyceraldehyde 3-phosphate and glycerone phosphate from D-glucose: step 3/4. With respect to regulation, allosterically activated by ADP and other diphosphonucleosides, and allosterically inhibited by phosphoenolpyruvate. Functionally, catalyzes the phosphorylation of D-fructose 6-phosphate to fructose 1,6-bisphosphate by ATP, the first committing step of glycolysis. In Yersinia pseudotuberculosis serotype O:1b (strain IP 31758), this protein is ATP-dependent 6-phosphofructokinase.